The chain runs to 432 residues: Alcohol acyltransferase 9 (432 aa).

Catalysis depends on proton acceptor residues H156 and D379.

This sequence belongs to the plant acyltransferase family. As to expression, expressed in fruit.

It catalyses the reaction 2-(methylsulfanyl)acetyl-CoA + butan-1-ol = butyl 2-(methylsulfanyl)acetate + CoA. The catalysed reaction is ethanol + acetyl-CoA = ethyl acetate + CoA. The enzyme catalyses butan-1-ol + acetyl-CoA = butyl acetate + CoA. It carries out the reaction butan-1-ol + propanoyl-CoA = butyl propanoate + CoA. In terms of biological role, involved in the biosynthesis of volatile esters which confer kiwifruit flavor. Alcohol acyl transferase that can use a wide range of alcohols as substrate to produce esters. Exhibits acetyl-CoA:alcohol O-acyltransferase activity. In Actinidia deliciosa (Kiwi), this protein is Alcohol acyltransferase 9.